The following is a 111-amino-acid chain: Large ribosomal subunit protein uL22 (111 aa).

This sequence belongs to the universal ribosomal protein uL22 family. In terms of assembly, part of the 50S ribosomal subunit.

In terms of biological role, this protein binds specifically to 23S rRNA; its binding is stimulated by other ribosomal proteins, e.g. L4, L17, and L20. It is important during the early stages of 50S assembly. It makes multiple contacts with different domains of the 23S rRNA in the assembled 50S subunit and ribosome. The globular domain of the protein is located near the polypeptide exit tunnel on the outside of the subunit, while an extended beta-hairpin is found that lines the wall of the exit tunnel in the center of the 70S ribosome. This is Large ribosomal subunit protein uL22 from Francisella tularensis subsp. tularensis (strain FSC 198).